The primary structure comprises 239 residues: MGQMADDLGWRLSLLLLSLLLARAGVWGFPRPPGRPPLSLQELQREFKVSLHLARKLLSEVRVQARHFAESHLPGVNLDLLPLGEQLPNVSLNFQAWRGLSDPERLCFLSMTLRPFHTLLGGLGSQGFWTSSERMQLWAIRLDLRDLQQHLRFQVLAAGFNLPGQEEEENEAGRELLPGAPGGPSKPAAQVSWPRLLYTYQLLHSLELVLSRAMRDFLLLSRAGNPAPALGFPTPSSPP.

The signal sequence occupies residues 1–28 (MGQMADDLGWRLSLLLLSLLLARAGVWG). Asn89 carries an N-linked (GlcNAc...) asparagine glycan. The disordered stretch occupies residues 167-186 (EEENEAGRELLPGAPGGPSK).

The protein belongs to the IL-6 superfamily. Heterodimer with EBI3; not disulfide-linked. This heterodimer is known as interleukin IL-27. Post-translationally, O-glycosylated.

The protein resides in the secreted. Associates with EBI3 to form the IL-27 interleukin, a heterodimeric cytokine which functions in innate immunity. Cytokine with pro- and anti-inflammatory properties, that can regulate T-helper cell development, suppress T-cell proliferation, stimulate cytotoxic T-cell activity, induce isotype switching in B-cells, and that has diverse effects on innate immune cells. Among its target cells are CD4 T-helper cells which can differentiate in type 1 effector cells (TH1), type 2 effector cells (TH2) and IL17 producing helper T-cells (TH17). It drives rapid clonal expansion of naive but not memory CD4 T-cells. It also strongly synergizes with IL-12 to trigger interferon-gamma/IFN-gamma production of naive CD4 T-cells, binds to the cytokine receptor WSX-1/TCCR which appears to be required but not sufficient for IL-27-mediated signal transduction. IL-27 potentiate the early phase of TH1 response and suppress TH2 and TH17 differentiation. It induces the differentiation of TH1 cells via two distinct pathways, p38 MAPK/TBX21- and ICAM1/ITGAL/ERK-dependent pathways. It also induces STAT1, STAT3, STAT4 and STAT5 phosphorylation and activates TBX21/T-Bet via STAT1 with resulting IL12RB2 up-regulation, an event crucial to TH1 cell commitment. It suppresses the expression of GATA3, the inhibitor TH1 cells development. In CD8 T-cells, it activates STATs as well as GZMB. IL-27 reveals to be a potent inhibitor of TH17 cell development and of IL-17 production. Indeed IL27 alone is also able to inhibit the production of IL17 by CD4 and CD8 T-cells. While IL-27 suppressed the development of pro-inflammatory Th17 cells via STAT1, it inhibits the development of anti-inflammatory inducible regulatory T-cells, iTreg, independently of STAT1. IL-27 also has an effect on cytokine production, it suppresses pro-inflammatory cytokine production such as IL2, IL4, IL5 and IL6 and activates suppressors of cytokine signaling such as SOCS1 and SOCS3. Apart from suppression of cytokine production, IL-27 also antagonizes the effects of some cytokines such as IL6 through direct effects on T-cells. Another important role of IL-27 is its antitumor activity as well as its antiangiogenic activity with activation of production of antiangiogenic chemokines such as IP-10/CXCL10 and MIG/CXCL9. In vein endothelial cells, it induces IRF1/interferon regulatory factor 1 and increase the expression of MHC class II transactivator/CIITA with resulting up-regulation of major histocompatibility complex class II. This chain is Interleukin-27 subunit alpha (IL27), found in Sus scrofa (Pig).